We begin with the raw amino-acid sequence, 538 residues long: ESX-3 secretion system ATPase EccB3 (538 aa).

Basic and acidic residues predominate over residues M1 to S16. The disordered stretch occupies residues M1–N25. A helical transmembrane segment spans residues V75 to I95.

The protein belongs to the EccB family. In terms of assembly, part of the ESX-3 / type VII secretion system (T7SS), which is composed of cytosolic and membrane components. The ESX-3 membrane complex is composed of EccB3, EccC3, EccD3 and EccE3.

It localises to the cell inner membrane. Functionally, an ATPase. Part of the ESX-3 specialized secretion system, which is important for iron and zinc uptake or homeostasis. The polypeptide is ESX-3 secretion system ATPase EccB3 (Mycobacterium tuberculosis (strain CDC 1551 / Oshkosh)).